The following is a 485-amino-acid chain: Kynureninase 1 (485 aa).

Pyridoxal 5'-phosphate is bound by residues L155, T156, 183-186 (FPSD), D267, H270, and Y292. K293 is modified (N6-(pyridoxal phosphate)lysine). W330 and N358 together coordinate pyridoxal 5'-phosphate.

This sequence belongs to the kynureninase family. As to quaternary structure, homodimer. It depends on pyridoxal 5'-phosphate as a cofactor.

Its subcellular location is the cytoplasm. It catalyses the reaction L-kynurenine + H2O = anthranilate + L-alanine + H(+). The catalysed reaction is 3-hydroxy-L-kynurenine + H2O = 3-hydroxyanthranilate + L-alanine + H(+). Its pathway is amino-acid degradation; L-kynurenine degradation; L-alanine and anthranilate from L-kynurenine: step 1/1. It functions in the pathway cofactor biosynthesis; NAD(+) biosynthesis; quinolinate from L-kynurenine: step 2/3. Its function is as follows. Catalyzes the cleavage of L-kynurenine (L-Kyn) and L-3-hydroxykynurenine (L-3OHKyn) into anthranilic acid (AA) and 3-hydroxyanthranilic acid (3-OHAA), respectively. In Neurospora crassa (strain ATCC 24698 / 74-OR23-1A / CBS 708.71 / DSM 1257 / FGSC 987), this protein is Kynureninase 1 (kyn-1).